The sequence spans 195 residues: MGNHAMLLEKHTAVRKGRLHDGKVMVMRSNLRWCSDGLEFACWNGEVIRLAFIIDAFDREIIAWTAVANAGISGSDVRDMMLEAVEKRFHATRAPHAIEHLSDNGSAYTARDTRLFAQALNLTPCFTPVASPQSNGMSEAFVKTLKRDYIRISALPDAQTALRLIDGWIEDYNEIHPHSALKMASPRQFIRAKSI.

The region spanning 25 to 194 (MVMRSNLRWC…SPRQFIRAKS (170 aa)) is the Integrase catalytic domain.

This Agrobacterium fabrum (strain C58 / ATCC 33970) (Agrobacterium tumefaciens (strain C58)) protein is Insertion element IS136 uncharacterized protein Atu4601.